The sequence spans 395 residues: Elongation factor Tu (395 aa).

The region spanning 10-205 (KPHVNIGTIG…VDSYIPLPPR (196 aa)) is the tr-type G domain. A G1 region spans residues 19–26 (GHVDHGKT). 19–26 (GHVDHGKT) serves as a coordination point for GTP. A Mg(2+)-binding site is contributed by threonine 26. The interval 60 to 64 (GITIN) is G2. Residues 81-84 (DCPG) form a G3 region. GTP-binding positions include 81–85 (DCPGH) and 136–139 (NKVD). A G4 region spans residues 136-139 (NKVD). Residues 174–176 (SAT) are G5.

The protein belongs to the TRAFAC class translation factor GTPase superfamily. Classic translation factor GTPase family. EF-Tu/EF-1A subfamily. As to quaternary structure, monomer.

It is found in the cytoplasm. The catalysed reaction is GTP + H2O = GDP + phosphate + H(+). Functionally, GTP hydrolase that promotes the GTP-dependent binding of aminoacyl-tRNA to the A-site of ribosomes during protein biosynthesis. This Terrimonas ferruginea (Flavobacterium ferrugineum) protein is Elongation factor Tu.